The sequence spans 447 residues: Tubulin beta-1 chain (447 aa).

Q11, E69, S138, G142, T143, G144, N204, and N226 together coordinate GTP. Mg(2+) is bound at residue E69.

It belongs to the tubulin family. Dimer of alpha and beta chains. A typical microtubule is a hollow water-filled tube with an outer diameter of 25 nm and an inner diameter of 15 nM. Alpha-beta heterodimers associate head-to-tail to form protofilaments running lengthwise along the microtubule wall with the beta-tubulin subunit facing the microtubule plus end conferring a structural polarity. Microtubules usually have 13 protofilaments but different protofilament numbers can be found in some organisms and specialized cells. Requires Mg(2+) as cofactor.

It localises to the cytoplasm. The protein resides in the cytoskeleton. Functionally, tubulin is the major constituent of microtubules, a cylinder consisting of laterally associated linear protofilaments composed of alpha- and beta-tubulin heterodimers. Microtubules grow by the addition of GTP-tubulin dimers to the microtubule end, where a stabilizing cap forms. Below the cap, tubulin dimers are in GDP-bound state, owing to GTPase activity of alpha-tubulin. The polypeptide is Tubulin beta-1 chain (Geotrichum candidum (Oospora lactis)).